The sequence spans 545 residues: Threonine--tRNA ligase catalytic subunit (545 aa).

Residues aspartate 139–proline 433 are catalytic. Residues cysteine 231, histidine 282, and histidine 410 each contribute to the Zn(2+) site.

Belongs to the class-II aminoacyl-tRNA synthetase family. In terms of assembly, homodimer. Probably interacts with its editing subunit. The cofactor is Zn(2+).

The protein resides in the cytoplasm. The catalysed reaction is tRNA(Thr) + L-threonine + ATP = L-threonyl-tRNA(Thr) + AMP + diphosphate + H(+). Its function is as follows. Catalyzes the attachment of threonine to tRNA(Thr) in a two-step reaction: L-threonine is first activated by ATP to form Thr-AMP and then transferred to the acceptor end of tRNA(Thr). Also activates L-serine and transfers it to tRNA(Thr) but cannot deacylate incorrectly charged amino acid; unlike most archaea the editing function is found in a freestanding protein. The sequence is that of Threonine--tRNA ligase catalytic subunit from Saccharolobus islandicus (strain L.S.2.15 / Lassen #1) (Sulfolobus islandicus).